The primary structure comprises 475 residues: Protein EARLY HEADING DATE 2 (475 aa).

Positions 1–16 (MLLSDLSSDQEATGSN) are enriched in polar residues. The disordered stretch occupies residues 1–26 (MLLSDLSSDQEATGSNSHGGGGGDRM). 2 C2H2-type zinc fingers span residues 105 to 127 (FVCE…RRGH) and 155 to 185 (YVCP…SRKH). 2 short sequence motifs (nuclear localization signal) span residues 123–130 (HRRGHNLP) and 177–184 (IKKHFSRK). Residues 190 to 213 (WRCERCGKRYAVHSDWKAHVKNCG) form a C2H2-type 2; degenerate zinc finger. Zn(2+) contacts are provided by C192, C195, H208, C212, C219, C221, H234, and C238. The CCHC-type 2; atypical zinc finger occupies 217-240 (YRCDCGILFSRKDSLLTHRAFCDA). Residues 227-239 (RKDSLLTHRAFCD) form an SHR-binding region.

In terms of tissue distribution, mostly expressed in developing leaves (more in sheaths than in blades, especially in the outer epidermal cell of immature leaves and in the region immediately beneath the meristem where internodes are visible) and panicles, and, at very low levels, around the shoot apex and in roots.

It localises to the nucleus. Its function is as follows. Transcription activator that acts as a flowering master switch in both long and short days, independently of the circadian clock. Promotes flowering upstream of HD1 by up-regulating FTL1, FTL4, FTL5, FTL6, EHD1, HD3A and RFT1. Seems to repress FTL11 expression. May recognize the consensus motif 5'-TTTGTCGTAAT-3' in target gene promoters. The polypeptide is Protein EARLY HEADING DATE 2 (Oryza sativa subsp. japonica (Rice)).